The primary structure comprises 253 residues: Imidazole glycerol phosphate synthase subunit HisF (253 aa).

Catalysis depends on residues Asp-11 and Asp-130.

The protein belongs to the HisA/HisF family. As to quaternary structure, heterodimer of HisH and HisF.

It localises to the cytoplasm. It carries out the reaction 5-[(5-phospho-1-deoxy-D-ribulos-1-ylimino)methylamino]-1-(5-phospho-beta-D-ribosyl)imidazole-4-carboxamide + L-glutamine = D-erythro-1-(imidazol-4-yl)glycerol 3-phosphate + 5-amino-1-(5-phospho-beta-D-ribosyl)imidazole-4-carboxamide + L-glutamate + H(+). It functions in the pathway amino-acid biosynthesis; L-histidine biosynthesis; L-histidine from 5-phospho-alpha-D-ribose 1-diphosphate: step 5/9. Functionally, IGPS catalyzes the conversion of PRFAR and glutamine to IGP, AICAR and glutamate. The HisF subunit catalyzes the cyclization activity that produces IGP and AICAR from PRFAR using the ammonia provided by the HisH subunit. This chain is Imidazole glycerol phosphate synthase subunit HisF, found in Ruegeria pomeroyi (strain ATCC 700808 / DSM 15171 / DSS-3) (Silicibacter pomeroyi).